The primary structure comprises 262 residues: Ribosomal RNA small subunit methyltransferase A (262 aa).

Asparagine 13, leucine 15, glycine 40, glutamate 61, aspartate 85, and asparagine 104 together coordinate S-adenosyl-L-methionine.

The protein belongs to the class I-like SAM-binding methyltransferase superfamily. rRNA adenine N(6)-methyltransferase family. RsmA subfamily.

It localises to the cytoplasm. It catalyses the reaction adenosine(1518)/adenosine(1519) in 16S rRNA + 4 S-adenosyl-L-methionine = N(6)-dimethyladenosine(1518)/N(6)-dimethyladenosine(1519) in 16S rRNA + 4 S-adenosyl-L-homocysteine + 4 H(+). In terms of biological role, specifically dimethylates two adjacent adenosines (A1518 and A1519) in the loop of a conserved hairpin near the 3'-end of 16S rRNA in the 30S particle. May play a critical role in biogenesis of 30S subunits. The protein is Ribosomal RNA small subunit methyltransferase A of Chromobacterium violaceum (strain ATCC 12472 / DSM 30191 / JCM 1249 / CCUG 213 / NBRC 12614 / NCIMB 9131 / NCTC 9757 / MK).